A 506-amino-acid polypeptide reads, in one-letter code: Anaerobic nitric oxide reductase transcription regulator NorR (506 aa).

Asp-57 carries the post-translational modification 4-aspartylphosphate. Residues 187-416 form the Sigma-54 factor interaction domain; the sequence is MIGLSPAMTQ…LEHAIHRAVV (230 aa). Residues 215–222 and 278–287 contribute to the ATP site; these read GETGTGKE and ADNGTLFLDE. Residues 481–500 constitute a DNA-binding region (H-T-H motif); it reads WAASARALETDVANLHRLAK.

It functions in the pathway nitrogen metabolism; nitric oxide reduction. Required for the expression of anaerobic nitric oxide (NO) reductase, acts as a transcriptional activator for at least the norVW operon. Activation also requires sigma-54. The chain is Anaerobic nitric oxide reductase transcription regulator NorR from Salmonella dublin (strain CT_02021853).